The sequence spans 504 residues: Probable cytosol aminopeptidase (504 aa).

Residues Lys-276 and Asp-281 each contribute to the Mn(2+) site. Lys-288 is a catalytic residue. 3 residues coordinate Mn(2+): Asp-299, Asp-358, and Glu-360. Arg-362 is a catalytic residue.

This sequence belongs to the peptidase M17 family. The cofactor is Mn(2+).

Its subcellular location is the cytoplasm. It catalyses the reaction Release of an N-terminal amino acid, Xaa-|-Yaa-, in which Xaa is preferably Leu, but may be other amino acids including Pro although not Arg or Lys, and Yaa may be Pro. Amino acid amides and methyl esters are also readily hydrolyzed, but rates on arylamides are exceedingly low.. The enzyme catalyses Release of an N-terminal amino acid, preferentially leucine, but not glutamic or aspartic acids.. Its function is as follows. Presumably involved in the processing and regular turnover of intracellular proteins. Catalyzes the removal of unsubstituted N-terminal amino acids from various peptides. This is Probable cytosol aminopeptidase from Bordetella avium (strain 197N).